The chain runs to 748 residues: Transcription factor FBD3 (748 aa).

A compositionally biased stretch (basic and acidic residues) spans 1-10 (MPEQPRRPSD). The disordered stretch occupies residues 1–26 (MPEQPRRPSDQEQNQSETGPPTNKRR). The span at 11–21 (QEQNQSETGPP) shows a compositional bias: polar residues. The zn(2)-C6 fungal-type DNA-binding region spans 32–59 (CNACRSRKSRCDGQRPSCSSCLSLGFDC). Disordered regions lie at residues 116–160 (GTIN…EGIP) and 417–438 (IPDE…TSGN). The segment covering 131–141 (APTKASAPSGA) has biased composition (low complexity). The span at 429–438 (SGRSPATSGN) shows a compositional bias: polar residues.

The protein resides in the nucleus. In terms of biological role, transcription factor; part of the Fusarium detoxification of benzoxazolinone cluster 2 (FDB2) involved in the degradation of benzoxazolinones produced by the host plant. Maize, wheat, and rye produce the 2 benzoxazinone phytoanticipins 2,4-dihy-droxy-7-methoxy-1,4-benzoxazin-3-one (DIMBOA) and 2,4-dihydroxy-1,4-benzoxazin-3-one (DIBOA) that, due to their inherent instability once released, spontaneously degrade to the more stable corresponding benzoxazolinones, 6-methoxy-2-benzoxazolinone (MBOA) and 2-benzoxazolinone (BOA), respectively. FDB3 is not essentiel, but contributes to efficient BOA biotransformation. The chain is Transcription factor FBD3 from Gibberella moniliformis (strain M3125 / FGSC 7600) (Maize ear and stalk rot fungus).